A 492-amino-acid polypeptide reads, in one-letter code: Katanin p60 ATPase-containing subunit A1 (492 aa).

Positions 80–186 are disordered; it reads STPPKASQQE…ESEPKKFDST (107 aa). Residues 145-171 are compositionally biased toward basic and acidic residues; the sequence is PNDKGKAVRGREKKDQQNKGKEEKSKS. 250-257 contributes to the ATP binding site; sequence GPPGTGKT.

The protein belongs to the AAA ATPase family. Katanin p60 subunit A1 subfamily. Can homooligomerize into hexameric rings, which may be promoted by interaction with microtubules. Interacts with KATNB1, which may serve as a targeting subunit.

It is found in the cytoplasm. It localises to the cytoskeleton. The protein localises to the microtubule organizing center. The protein resides in the centrosome. Its subcellular location is the spindle pole. It is found in the spindle. The enzyme catalyses n ATP + n H2O + a microtubule = n ADP + n phosphate + (n+1) alpha/beta tubulin heterodimers.. ATPase activity is stimulated by microtubules, which promote homooligomerization. ATP-dependent microtubule severing is stimulated by interaction with KATNB1. Its function is as follows. Catalytic subunit of a complex which severs microtubules in an ATP-dependent manner. Microtubule severing may promote rapid reorganization of cellular microtubule arrays and the release of microtubules from the centrosome following nucleation. This Gallus gallus (Chicken) protein is Katanin p60 ATPase-containing subunit A1.